The sequence spans 278 residues: Gap junction delta-3 protein (278 aa).

The Cytoplasmic segment spans residues 1-24; the sequence is MGEWAFLGSLLDAVQLQSPLVGRL. The chain crosses the membrane as a helical span at residues 25-45; the sequence is WLVIMLIFRILVLATVGGAVF. The Extracellular portion of the chain corresponds to 46–76; the sequence is EDEQEEFVCNTLQPGCRQTCYDRAFPVSHYR. Residues 77–97 traverse the membrane as a helical segment; sequence FWLFHILLLSAPPVLFVIYSM. Residues 98-136 lie on the Cytoplasmic side of the membrane; it reads HQASKEAGGAQLAPPCARGRAEAPCSPCALRARRARRCY. The helical transmembrane segment at 137 to 157 threads the bilayer; the sequence is LLSVALRLLAELAFLGGQALL. At 158–188 the chain is on the extracellular side; the sequence is YGFRVDPHYACAGPPCPHTVDCFVSRPTEKT. A helical transmembrane segment spans residues 189–209; sequence VFVVFYFAVGLLSALLSVAEL. The Cytoplasmic segment spans residues 210–278; that stretch reads GHLLWKGRQR…LATVRQDLAI (69 aa). The segment at 223 to 278 is disordered; it reads LPPPPPSPSLPSQRGDPDPFGPPAYAHRSPAGDSEGEGGSGHSKASLATVRQDLAI.

It belongs to the connexin family. Delta-type subfamily. A connexon is composed of a hexamer of connexins.

The protein localises to the cell membrane. It is found in the cell junction. The protein resides in the gap junction. Its function is as follows. One gap junction consists of a cluster of closely packed pairs of transmembrane channels, the connexons, through which materials of low MW diffuse from one cell to a neighboring cell. The sequence is that of Gap junction delta-3 protein (Gjd3) from Mus musculus (Mouse).